Here is an 885-residue protein sequence, read N- to C-terminus: Alanine--tRNA ligase (885 aa).

Histidine 571, histidine 575, cysteine 674, and histidine 678 together coordinate Zn(2+).

The protein belongs to the class-II aminoacyl-tRNA synthetase family. Requires Zn(2+) as cofactor.

Its subcellular location is the cytoplasm. The catalysed reaction is tRNA(Ala) + L-alanine + ATP = L-alanyl-tRNA(Ala) + AMP + diphosphate. Functionally, catalyzes the attachment of alanine to tRNA(Ala) in a two-step reaction: alanine is first activated by ATP to form Ala-AMP and then transferred to the acceptor end of tRNA(Ala). Also edits incorrectly charged Ser-tRNA(Ala) and Gly-tRNA(Ala) via its editing domain. The polypeptide is Alanine--tRNA ligase (Clavibacter michiganensis subsp. michiganensis (strain NCPPB 382)).